We begin with the raw amino-acid sequence, 492 residues long: N-succinylglutamate 5-semialdehyde dehydrogenase (492 aa).

220-225 (GSANTG) lines the NAD(+) pocket. Residues Glu243 and Cys277 contribute to the active site.

The protein belongs to the aldehyde dehydrogenase family. AstD subfamily.

It carries out the reaction N-succinyl-L-glutamate 5-semialdehyde + NAD(+) + H2O = N-succinyl-L-glutamate + NADH + 2 H(+). It participates in amino-acid degradation; L-arginine degradation via AST pathway; L-glutamate and succinate from L-arginine: step 4/5. Its function is as follows. Catalyzes the NAD-dependent reduction of succinylglutamate semialdehyde into succinylglutamate. This chain is N-succinylglutamate 5-semialdehyde dehydrogenase, found in Escherichia coli O7:K1 (strain IAI39 / ExPEC).